Consider the following 84-residue polypeptide: Small ribosomal subunit protein uS17 (84 aa).

This sequence belongs to the universal ribosomal protein uS17 family. In terms of assembly, part of the 30S ribosomal subunit.

In terms of biological role, one of the primary rRNA binding proteins, it binds specifically to the 5'-end of 16S ribosomal RNA. This is Small ribosomal subunit protein uS17 from Clostridium novyi (strain NT).